A 341-amino-acid chain; its full sequence is MDHAADAHRTDLMTITRFVLNEQSKYPESRGDFTILLSHIVLGCKFVCSAVNKAGLAKLIGLAGETNIQGEEQKKLDVLSNDVFVNALVSSGRTSVLVSEEDEEATFVEPSKRGKYCVVFDPLDGSSNIDCGVSIGTIFGIYTLDHTDEPTTADVLKPGNEMVAAGYCMYGSSCMLVLSTGTGVHGFTLDPSLGEFILTHPDIKIPNKGNIYSVNEGNAQNWDGPTTKYVEKCKFPKDGSPAKSLRYVGSMVADVHRTLLYGGIFLYPADKKSPNGKLRVLYEVFPMSFLMEQAGGQAFTGKKRALDLVPEKIHERSPIFLGSYDDVEEIKALYAEEEKKN.

5 residues coordinate Mg(2+): Glu-71, Glu-100, Asp-121, Leu-123, and Asp-124. Substrate is bound by residues 124 to 127, Asn-215, Tyr-247, Tyr-267, and Lys-277; that span reads DGSS. Glu-283 lines the Mg(2+) pocket.

The protein belongs to the FBPase class 1 family. Mg(2+) serves as cofactor.

Its subcellular location is the cytoplasm. It is found in the nucleus. It carries out the reaction beta-D-fructose 1,6-bisphosphate + H2O = beta-D-fructose 6-phosphate + phosphate. Its function is as follows. Catalyzes the first irreversible reaction from fructose-1,6-bisphosphate to fructose-6-phosphate and inorganic phosphate and plays an important regulatory role in sucrose biosynthesis and metabolism. Its activity is essential to regulate starch levels. Functions in fructose-mediated signaling independently of its catalytic activity in sugar metabolism. May act downstream of ABA2/GIN1, which is involved in abscisic acid (ABA) synthesis to regulate autotrophic transition and modulate early seedling establishment after seed germination. In Arabidopsis thaliana (Mouse-ear cress), this protein is Fructose-1,6-bisphosphatase, cytosolic.